A 622-amino-acid chain; its full sequence is 1,4-alpha-glucan branching enzyme GlgB (622 aa).

Catalysis depends on D306, which acts as the Nucleophile. The active-site Proton donor is the E358. Residues 581 to 606 form a disordered region; sequence YGGSNVGNRGAVHSDPVEKHGHSHSL.

The protein belongs to the glycosyl hydrolase 13 family. GlgB subfamily. As to quaternary structure, monomer.

It carries out the reaction Transfers a segment of a (1-&gt;4)-alpha-D-glucan chain to a primary hydroxy group in a similar glucan chain.. The protein operates within glycan biosynthesis; glycogen biosynthesis. Its function is as follows. Catalyzes the formation of the alpha-1,6-glucosidic linkages in glycogen by scission of a 1,4-alpha-linked oligosaccharide from growing alpha-1,4-glucan chains and the subsequent attachment of the oligosaccharide to the alpha-1,6 position. The protein is 1,4-alpha-glucan branching enzyme GlgB of Salinibacter ruber (strain DSM 13855 / M31).